The primary structure comprises 66 residues: DNA-directed RNA polymerase subunit Rpo10 (66 aa).

Positions 7, 10, 47, and 48 each coordinate Zn(2+).

It belongs to the archaeal Rpo10/eukaryotic RPB10 RNA polymerase subunit family. In terms of assembly, part of the RNA polymerase complex. Zn(2+) serves as cofactor.

It is found in the cytoplasm. The catalysed reaction is RNA(n) + a ribonucleoside 5'-triphosphate = RNA(n+1) + diphosphate. In terms of biological role, DNA-dependent RNA polymerase (RNAP) catalyzes the transcription of DNA into RNA using the four ribonucleoside triphosphates as substrates. This chain is DNA-directed RNA polymerase subunit Rpo10, found in Halobacterium salinarum (strain ATCC 29341 / DSM 671 / R1).